A 417-amino-acid polypeptide reads, in one-letter code: F-box protein At3g07870 (417 aa).

Positions 22 to 68 (GGGLESLPEDIIADIFSRLPISSIARLMFVCRSWRSVLTQHGRLSSS) constitute an F-box domain.

The sequence is that of F-box protein At3g07870 from Arabidopsis thaliana (Mouse-ear cress).